The chain runs to 88 residues: Toxin RelE3 (88 aa).

The protein belongs to the RelE toxin family. Forms heterodimers with RelB3 and possibly a heterotetramer RelE3-RelB3(2)-RelE3 from 2 heterodimers. The heterotetramer is probably not very stable in solution.

Its function is as follows. Toxic component of a type II toxin-antitoxin (TA) system. Has RNase activity. Is very toxic upon expression in E.coli. Its toxic activity is probably neutralized by the cognate antitoxin RelB3. The polypeptide is Toxin RelE3 (relE3) (Methanocaldococcus jannaschii (strain ATCC 43067 / DSM 2661 / JAL-1 / JCM 10045 / NBRC 100440) (Methanococcus jannaschii)).